We begin with the raw amino-acid sequence, 151 residues long: MIIEQVVGNIDNISDEILNKLHLENVFVESSNLVKKVQRVVTDHGREIGICLNGQKDLSPGDILYMDERDIIVLNVIPDDLLVIRPSSLRQMGDIAHKIGNRHIPAQFDEIEMLVQYDYLVEELLKQLEVPYTRENKKVKLAFRHVGHSHG.

The protein belongs to the UreE family.

The protein localises to the cytoplasm. Functionally, involved in urease metallocenter assembly. Binds nickel. Probably functions as a nickel donor during metallocenter assembly. The polypeptide is Urease accessory protein UreE (Lachnoclostridium phytofermentans (strain ATCC 700394 / DSM 18823 / ISDg) (Clostridium phytofermentans)).